Reading from the N-terminus, the 475-residue chain is FAD-dependent monooxygenase spyC (475 aa).

Residues 1–24 (MTAKPPFKVIIVGGSIAGLTLAHC) form the signal peptide. Residues Glu-36, Gly-50, Arg-109, Asp-310, and Ala-323 each contribute to the FAD site. The helical transmembrane segment at 444–464 (LLIPFLYPVVAFSLCVLAWIG) threads the bilayer.

The protein belongs to the paxM FAD-dependent monooxygenase family. FAD serves as cofactor.

It is found in the membrane. It catalyses the reaction (2E,6E,10E)-geranylgeranyl-triacetate lactone + AH2 + O2 = (S)-(2E,6E,10E)-epoxygeranylgeranyl-triacetate lactone + A + H2O. Its pathway is secondary metabolite biosynthesis; terpenoid biosynthesis. Functionally, FAD-dependent monooxygenase spyC; part of the gene cluster that mediates the biosynthesis of meroterpenoids called sartorypyrones. Within the pathway, spyC catalyzes the epoxidation of geranylgeranyl-triacetate lactone at the terminal olein to yield epoxygeranylgeranyl-triacetate lactone. The biosynthesis of sartorypyrones begins with the production of triacetic acid lactone (TAL) by the NR-PKS spyA using one molecule of acetyl-CoA and two molecules of malonyl-CoA. The prenyltransferase spyF then conjugates geranylgeranyl pyrophosphate (GGPP) to TAL to form geranylgeranyl-triacetate lactone, for which the pathway-specific geranylgeranyl pyrophosphate synthase (GGPS) spyE is required to provide GGPP. Subsequently, geranylgeranyl-triacetate lactone is epoxidized at the terminal olein by the FAD-dependent monooxygenase spyC, followed by cyclization of the terpenoid component catalyzed by the terpene cyclase spyD to produce both the bicyclic sartorypyrone F and the monocyclic sartorypyrone D. Finally, the last step of the biosynthesis involves the acetylation of the meroterpenoids sartorypyrones D and F by the acetyltransferase SpyB to produce sartorypyrones A and G, respectively. In Aspergillus fumigatus (strain ATCC MYA-4609 / CBS 101355 / FGSC A1100 / Af293) (Neosartorya fumigata), this protein is FAD-dependent monooxygenase spyC.